Reading from the N-terminus, the 257-residue chain is Ubiquinone biosynthesis O-methyltransferase (257 aa).

S-adenosyl-L-methionine-binding residues include arginine 43, glycine 77, aspartate 98, and methionine 144.

This sequence belongs to the methyltransferase superfamily. UbiG/COQ3 family.

It carries out the reaction a 3-demethylubiquinol + S-adenosyl-L-methionine = a ubiquinol + S-adenosyl-L-homocysteine + H(+). The enzyme catalyses a 3-(all-trans-polyprenyl)benzene-1,2-diol + S-adenosyl-L-methionine = a 2-methoxy-6-(all-trans-polyprenyl)phenol + S-adenosyl-L-homocysteine + H(+). It participates in cofactor biosynthesis; ubiquinone biosynthesis. In terms of biological role, O-methyltransferase that catalyzes the 2 O-methylation steps in the ubiquinone biosynthetic pathway. This is Ubiquinone biosynthesis O-methyltransferase from Psychrobacter cryohalolentis (strain ATCC BAA-1226 / DSM 17306 / VKM B-2378 / K5).